Here is a 237-residue protein sequence, read N- to C-terminus: MRPSDRTPAQSRPVTITRQFTAHAEGSVLVEFGDTKVLCTASFEEGVPRFLKGKGQGWVTAEYGMLPRSTHSRMNREAARGKQSGRTQEIQRLIGRSLRAAVDMKALGENTIVIDCDVIQADGGTRTAAITGACVALVDSLNWARGKGILKTNPLKFLIAAVSVGIYKGEPICDLEYIEDSEAETDMNVVMTETGKMIEIQGTAEGEPFSHEELLSLLELAKHGIREIVDIQKAALS.

Phosphate-binding positions include Arg-86 and 124 to 126 (GTR).

The protein belongs to the RNase PH family. Homohexameric ring arranged as a trimer of dimers.

It catalyses the reaction tRNA(n+1) + phosphate = tRNA(n) + a ribonucleoside 5'-diphosphate. Its function is as follows. Phosphorolytic 3'-5' exoribonuclease that plays an important role in tRNA 3'-end maturation. Removes nucleotide residues following the 3'-CCA terminus of tRNAs; can also add nucleotides to the ends of RNA molecules by using nucleoside diphosphates as substrates, but this may not be physiologically important. Probably plays a role in initiation of 16S rRNA degradation (leading to ribosome degradation) during starvation. The polypeptide is Ribonuclease PH (Shewanella sediminis (strain HAW-EB3)).